A 307-amino-acid chain; its full sequence is uncharacterized protein (307 aa).

8 consecutive transmembrane segments (helical) span residues 1-21 (MLIL…MNML), 52-72 (IVFT…IGFV), 99-119 (FIAI…LLFF), 133-153 (FLGL…AGPL), 174-194 (LLIG…IGIL), 208-228 (AMSV…MAAV), 242-262 (VVFN…ATGF), and 277-297 (FSLL…NLFY).

The protein resides in the cell membrane. This is an uncharacterized protein from Bacillus subtilis (strain 168).